Here is a 420-residue protein sequence, read N- to C-terminus: Protein translocase subunit SecY (420 aa).

10 helical membrane passes run isoleucine 9 to glycine 29, leucine 61 to leucine 81, isoleucine 104 to leucine 124, valine 141 to glycine 161, isoleucine 173 to phenylalanine 193, isoleucine 203 to valine 223, leucine 257 to leucine 277, tyrosine 300 to phenylalanine 320, lysine 355 to valine 375, and alanine 377 to isoleucine 397.

Belongs to the SecY/SEC61-alpha family. Component of the Sec protein translocase complex. Heterotrimer consisting of SecY, SecE and SecG subunits. The heterotrimers can form oligomers, although 1 heterotrimer is thought to be able to translocate proteins. Interacts with the ribosome. Interacts with SecDF, and other proteins may be involved. Interacts with SecA.

Its subcellular location is the cell inner membrane. In terms of biological role, the central subunit of the protein translocation channel SecYEG. Consists of two halves formed by TMs 1-5 and 6-10. These two domains form a lateral gate at the front which open onto the bilayer between TMs 2 and 7, and are clamped together by SecE at the back. The channel is closed by both a pore ring composed of hydrophobic SecY resides and a short helix (helix 2A) on the extracellular side of the membrane which forms a plug. The plug probably moves laterally to allow the channel to open. The ring and the pore may move independently. This is Protein translocase subunit SecY from Helicobacter pylori (strain ATCC 700392 / 26695) (Campylobacter pylori).